We begin with the raw amino-acid sequence, 216 residues long: Purine nucleoside phosphorylase DeoD-type (216 aa).

Residues R4, R23, and 67–70 (RVGT) each bind phosphate. A purine D-ribonucleoside-binding positions include 159–161 (EME) and 183–184 (SD). D184 acts as the Proton donor in catalysis.

This sequence belongs to the PNP/UDP phosphorylase family. Homohexamer; trimer of homodimers.

It carries out the reaction a purine D-ribonucleoside + phosphate = a purine nucleobase + alpha-D-ribose 1-phosphate. The enzyme catalyses a purine 2'-deoxy-D-ribonucleoside + phosphate = a purine nucleobase + 2-deoxy-alpha-D-ribose 1-phosphate. In terms of biological role, catalyzes the reversible phosphorolytic breakdown of the N-glycosidic bond in the beta-(deoxy)ribonucleoside molecules, with the formation of the corresponding free purine bases and pentose-1-phosphate. In Streptococcus thermophilus, this protein is Purine nucleoside phosphorylase DeoD-type.